An 81-amino-acid chain; its full sequence is ATP synthase subunit c (81 aa).

Transmembrane regions (helical) follow at residues 6–26 (AAASVIAAALAVGLAAIGPGF) and 57–77 (LAFMESLTIYGLVIALVLLFA).

Belongs to the ATPase C chain family. As to quaternary structure, F-type ATPases have 2 components, F(1) - the catalytic core - and F(0) - the membrane proton channel. F(1) has five subunits: alpha(3), beta(3), gamma(1), delta(1), epsilon(1). F(0) has four main subunits: a(1), b(1), b'(1) and c(10-14). The alpha and beta chains form an alternating ring which encloses part of the gamma chain. F(1) is attached to F(0) by a central stalk formed by the gamma and epsilon chains, while a peripheral stalk is formed by the delta, b and b' chains.

The protein resides in the cellular thylakoid membrane. F(1)F(0) ATP synthase produces ATP from ADP in the presence of a proton or sodium gradient. F-type ATPases consist of two structural domains, F(1) containing the extramembraneous catalytic core and F(0) containing the membrane proton channel, linked together by a central stalk and a peripheral stalk. During catalysis, ATP synthesis in the catalytic domain of F(1) is coupled via a rotary mechanism of the central stalk subunits to proton translocation. In terms of biological role, key component of the F(0) channel; it plays a direct role in translocation across the membrane. A homomeric c-ring of between 10-14 subunits forms the central stalk rotor element with the F(1) delta and epsilon subunits. This is ATP synthase subunit c from Rippkaea orientalis (strain PCC 8801 / RF-1) (Cyanothece sp. (strain PCC 8801)).